A 329-amino-acid polypeptide reads, in one-letter code: 4-hydroxy-3-methylbut-2-enyl diphosphate reductase (329 aa).

Cys-27 contacts [4Fe-4S] cluster. (2E)-4-hydroxy-3-methylbut-2-enyl diphosphate contacts are provided by His-56 and His-89. Residues His-56 and His-89 each contribute to the dimethylallyl diphosphate site. Positions 56 and 89 each coordinate isopentenyl diphosphate. Cys-111 lines the [4Fe-4S] cluster pocket. His-139 contributes to the (2E)-4-hydroxy-3-methylbut-2-enyl diphosphate binding site. His-139 contacts dimethylallyl diphosphate. His-139 serves as a coordination point for isopentenyl diphosphate. Catalysis depends on Glu-141, which acts as the Proton donor. Position 179 (Thr-179) interacts with (2E)-4-hydroxy-3-methylbut-2-enyl diphosphate. Cys-209 contributes to the [4Fe-4S] cluster binding site. Residues Ser-237, Ser-238, Asn-239, and Ser-281 each coordinate (2E)-4-hydroxy-3-methylbut-2-enyl diphosphate. Residues Ser-237, Ser-238, Asn-239, and Ser-281 each contribute to the dimethylallyl diphosphate site. The isopentenyl diphosphate site is built by Ser-237, Ser-238, Asn-239, and Ser-281.

The protein belongs to the IspH family. It depends on [4Fe-4S] cluster as a cofactor.

It catalyses the reaction isopentenyl diphosphate + 2 oxidized [2Fe-2S]-[ferredoxin] + H2O = (2E)-4-hydroxy-3-methylbut-2-enyl diphosphate + 2 reduced [2Fe-2S]-[ferredoxin] + 2 H(+). The enzyme catalyses dimethylallyl diphosphate + 2 oxidized [2Fe-2S]-[ferredoxin] + H2O = (2E)-4-hydroxy-3-methylbut-2-enyl diphosphate + 2 reduced [2Fe-2S]-[ferredoxin] + 2 H(+). Its pathway is isoprenoid biosynthesis; dimethylallyl diphosphate biosynthesis; dimethylallyl diphosphate from (2E)-4-hydroxy-3-methylbutenyl diphosphate: step 1/1. The protein operates within isoprenoid biosynthesis; isopentenyl diphosphate biosynthesis via DXP pathway; isopentenyl diphosphate from 1-deoxy-D-xylulose 5-phosphate: step 6/6. Functionally, catalyzes the conversion of 1-hydroxy-2-methyl-2-(E)-butenyl 4-diphosphate (HMBPP) into a mixture of isopentenyl diphosphate (IPP) and dimethylallyl diphosphate (DMAPP). Acts in the terminal step of the DOXP/MEP pathway for isoprenoid precursor biosynthesis. In Methylibium petroleiphilum (strain ATCC BAA-1232 / LMG 22953 / PM1), this protein is 4-hydroxy-3-methylbut-2-enyl diphosphate reductase.